Here is a 115-residue protein sequence, read N- to C-terminus: MTNIIQEIEQEQLKENIPHFRPGDTVEVKVWVIEGSKKRLQSFEGIVISIKNRSLNSSFTVRKVSNGEGIERVFQTHSYSIDSIFVKRKGKVRKAKLYYLRTRTGKSARIKERIE.

This sequence belongs to the bacterial ribosomal protein bL19 family.

Functionally, this protein is located at the 30S-50S ribosomal subunit interface and may play a role in the structure and function of the aminoacyl-tRNA binding site. The chain is Large ribosomal subunit protein bL19 from Buchnera aphidicola subsp. Schizaphis graminum (strain Sg).